A 403-amino-acid chain; its full sequence is Imidazolonepropionase (403 aa).

2 residues coordinate Fe(3+): His69 and His71. Zn(2+) is bound by residues His69 and His71. Arg78, Tyr141, and His174 together coordinate 4-imidazolone-5-propanoate. Tyr141 is a binding site for N-formimidoyl-L-glutamate. His239 is a binding site for Fe(3+). Residue His239 coordinates Zn(2+). Gln242 lines the 4-imidazolone-5-propanoate pocket. Asp314 contacts Fe(3+). Position 314 (Asp314) interacts with Zn(2+). N-formimidoyl-L-glutamate contacts are provided by Asn316 and Gly318. Ser319 is a binding site for 4-imidazolone-5-propanoate.

The protein belongs to the metallo-dependent hydrolases superfamily. HutI family. Zn(2+) is required as a cofactor. Fe(3+) serves as cofactor.

It is found in the cytoplasm. The enzyme catalyses 4-imidazolone-5-propanoate + H2O = N-formimidoyl-L-glutamate. It functions in the pathway amino-acid degradation; L-histidine degradation into L-glutamate; N-formimidoyl-L-glutamate from L-histidine: step 3/3. Its function is as follows. Catalyzes the hydrolytic cleavage of the carbon-nitrogen bond in imidazolone-5-propanoate to yield N-formimidoyl-L-glutamate. It is the third step in the universal histidine degradation pathway. The sequence is that of Imidazolonepropionase from Legionella pneumophila (strain Paris).